A 233-amino-acid polypeptide reads, in one-letter code: Antiholin-like protein LrgB (233 aa).

6 helical membrane passes run 5-25 (LGIN…VIAT), 33-53 (GFFL…FLKL), 63-83 (IGGD…AIPL), 97-117 (IFGG…LVAI), 152-172 (LTSL…AKIV), and 212-232 (IAVV…APIL).

This sequence belongs to the CidB/LrgB family. LrgB subfamily.

The protein localises to the cell membrane. Inhibits the expression or activity of extracellular murein hydrolases by interacting, possibly with LrgA, with the holin-like proteins CidA and/or CidB. The LrgAB and CidAB proteins may affect the proton motive force of the membrane. May be involved in programmed cell death (PCD), possibly triggering PCD in response to antibiotics and environmental stresses. The protein is Antiholin-like protein LrgB of Staphylococcus epidermidis (strain ATCC 12228 / FDA PCI 1200).